A 376-amino-acid chain; its full sequence is Zinc transporter 7 (376 aa).

At 1-37 (MLPLSIKDDEYKPPKFNLFGKISGWFRSILSDKTSRN) the chain is on the cytoplasmic side. Residues 38 to 58 (LFFFLCLNLSFAFVELLYGIW) traverse the membrane as a helical segment. The Lumenal segment spans residues 59–67 (SNCLGLISD). A helical transmembrane segment spans residues 68 to 88 (SFHMFFDSTAILAGLAASVIS). Residues 89–102 (KWRDNDAFSYGYVR) lie on the Cytoplasmic side of the membrane. The chain crosses the membrane as a helical span at residues 103–123 (AEVLAGFVNGLFLIFTAFFIF). At 124–140 (SEGVERALAPPDVHHER) the chain is on the lumenal side. A helical transmembrane segment spans residues 141–161 (LLLVSILGFVVNLIGIFVFKH). A his-rich loop region spans residues 161–218 (HGGHGHSHGSGHGHSHSLFNGALDQAHGHVDHCHSHEVKHGAAHSHDHAHGHGHFHSH). Residues 162–236 (GGHGHSHGSG…TGPSRQILQG (75 aa)) are Cytoplasmic-facing. The segment covering 194–222 (HSHEVKHGAAHSHDHAHGHGHFHSHDGPS) has biased composition (basic and acidic residues). The tract at residues 194-226 (HSHEVKHGAAHSHDHAHGHGHFHSHDGPSLKET) is disordered. Residues 237–257 (VFLHILADTLGSIGVIASAIM) traverse the membrane as a helical segment. The Lumenal portion of the chain corresponds to 258-262 (MQNFG). A helical membrane pass occupies residues 263–283 (LMIADPICSILIAILIVVSVI). Topologically, residues 284–376 (PLLRESVGIL…LYVQIDFAAM (93 aa)) are cytoplasmic.

This sequence belongs to the cation diffusion facilitator (CDF) transporter (TC 2.A.4) family. SLC30A subfamily. Homooligomer. Highly expressed in megakaryocytes and other bone marrow cells and in the epithelium of the small intestine. Expressed in testis (in Leydig cells), adrenal gland (in adrenal medula, zona fasciculata and zona of reticularis), and pituitary gland (in somatotropic cells).

The protein localises to the golgi apparatus membrane. It localises to the cytoplasmic vesicle. Its subcellular location is the golgi apparatus. The protein resides in the trans-Golgi network. It is found in the sarcoplasmic reticulum. The protein localises to the mitochondrion. The catalysed reaction is Zn(2+)(in) = Zn(2+)(out). Its function is as follows. Zinc ion transporter mediating zinc entry from the cytosol into the lumen of organelles along the secretory pathway. By contributing to zinc ion homeostasis within the early secretory pathway, regulates the activation and folding of enzymes like alkaline phosphatases. The protein is Zinc transporter 7 of Homo sapiens (Human).